The following is a 337-amino-acid chain: DNA-directed RNA polymerase subunit alpha (337 aa).

The tract at residues 1–233 (MIQKNWQELI…DQLSIFVNFE (233 aa)) is alpha N-terminal domain (alpha-NTD). The segment at 249-337 (FNPALLKKVD…DLAKRYEDQY (89 aa)) is alpha C-terminal domain (alpha-CTD).

The protein belongs to the RNA polymerase alpha chain family. Homodimer. The RNAP catalytic core consists of 2 alpha, 1 beta, 1 beta' and 1 omega subunit. When a sigma factor is associated with the core the holoenzyme is formed, which can initiate transcription.

It carries out the reaction RNA(n) + a ribonucleoside 5'-triphosphate = RNA(n+1) + diphosphate. In terms of biological role, DNA-dependent RNA polymerase catalyzes the transcription of DNA into RNA using the four ribonucleoside triphosphates as substrates. This is DNA-directed RNA polymerase subunit alpha from Brucella suis (strain ATCC 23445 / NCTC 10510).